Reading from the N-terminus, the 185-residue chain is Ribosome-recycling factor (185 aa).

Belongs to the RRF family.

The protein resides in the cytoplasm. In terms of biological role, responsible for the release of ribosomes from messenger RNA at the termination of protein biosynthesis. May increase the efficiency of translation by recycling ribosomes from one round of translation to another. This Francisella tularensis subsp. tularensis (strain FSC 198) protein is Ribosome-recycling factor.